The following is a 364-amino-acid chain: MVPELMFDEPRPGRPPRHLADLDAAGRASAVAELGLPAFRAKQLAHQYYGRLIADPRQMTDLPAAVRDRIAGAMFPNLLTASADITCDAGQTRKTLWRAVDGTMFESVLMRYPRRNTVCISSQAGCGMACPFCATGQGGLTRNLSTAEILEQVRAGAAALRDDFGDRLSNVVFMGMGEPLANYARVLAAVQRITARPPSGFGISARAVTVSTVGLAPAIRNLADARLGVTLALSLHAPDDGLRDTLVPVNNRWRISEALDAARYYANVTGRRVSIEYALIRDVNDQPWRADLLGKRLHRVLGPLAHVNLIPLNPTPGSDWDASPKPVEREFVKRVRAKGVSCTVRDTRGREISAACGQLAAVGG.

Glu-106 acts as the Proton acceptor in catalysis. The 239-residue stretch at 112 to 350 (YPRRNTVCIS…SCTVRDTRGR (239 aa)) folds into the Radical SAM core domain. Residues Cys-119 and Cys-356 are joined by a disulfide bond. [4Fe-4S] cluster is bound by residues Cys-126, Cys-130, and Cys-133. S-adenosyl-L-methionine is bound by residues 177–178 (GE), Ser-211, 234–236 (SLH), and Asn-313. The active-site S-methylcysteine intermediate is Cys-356.

The protein belongs to the radical SAM superfamily. RlmN family. Requires [4Fe-4S] cluster as cofactor.

It localises to the cytoplasm. The enzyme catalyses adenosine(2503) in 23S rRNA + 2 reduced [2Fe-2S]-[ferredoxin] + 2 S-adenosyl-L-methionine = 2-methyladenosine(2503) in 23S rRNA + 5'-deoxyadenosine + L-methionine + 2 oxidized [2Fe-2S]-[ferredoxin] + S-adenosyl-L-homocysteine. It catalyses the reaction adenosine(37) in tRNA + 2 reduced [2Fe-2S]-[ferredoxin] + 2 S-adenosyl-L-methionine = 2-methyladenosine(37) in tRNA + 5'-deoxyadenosine + L-methionine + 2 oxidized [2Fe-2S]-[ferredoxin] + S-adenosyl-L-homocysteine. Specifically methylates position 2 of adenine 2503 in 23S rRNA and position 2 of adenine 37 in tRNAs. This Mycobacterium bovis (strain ATCC BAA-935 / AF2122/97) protein is Probable dual-specificity RNA methyltransferase RlmN.